The sequence spans 395 residues: Na(+)/H(+) antiporter NhaA (395 aa).

The next 11 helical transmembrane spans lie at 15-35 (FLGS…AGFV), 66-86 (IDAW…ILEI), 101-121 (VALP…TYLL), 132-152 (GWAI…LALG), 161-181 (AWLM…IAVF), 184-204 (NALY…LIGA), 219-239 (CILL…AGVI), 265-285 (ALTP…NVGV), 301-321 (LGIM…ATLL), 339-359 (VFGL…IANL), and 366-386 (LVIP…LAGW).

This sequence belongs to the NhaA Na(+)/H(+) (TC 2.A.33) antiporter family.

It is found in the cell inner membrane. It carries out the reaction Na(+)(in) + 2 H(+)(out) = Na(+)(out) + 2 H(+)(in). Its function is as follows. Na(+)/H(+) antiporter that extrudes sodium in exchange for external protons. The protein is Na(+)/H(+) antiporter NhaA of Gluconacetobacter diazotrophicus (strain ATCC 49037 / DSM 5601 / CCUG 37298 / CIP 103539 / LMG 7603 / PAl5).